We begin with the raw amino-acid sequence, 227 residues long: Germin-like protein subfamily 1 member 6 (227 aa).

A signal peptide spans 1–25 (MMEVLLRLLVTQVILLALATSFVSC). Cys35 and Cys51 form a disulfide bridge. One can recognise a Cupin type-1 domain in the interval 65 to 216 (SGLNIARNTT…AFQLDVKLVR (152 aa)). N-linked (GlcNAc...) asparagine glycans are attached at residues Asn72 and Asn80. The Mn(2+) site is built by His113, His115, Glu120, and His162.

The protein belongs to the germin family. Oligomer (believed to be a pentamer but probably hexamer).

It is found in the secreted. Its subcellular location is the extracellular space. It localises to the apoplast. Functionally, may play a role in plant defense. Probably has no oxalate oxidase activity even if the active site is conserved. The sequence is that of Germin-like protein subfamily 1 member 6 from Arabidopsis thaliana (Mouse-ear cress).